The primary structure comprises 119 residues: Flagellar transcriptional regulator FlhD (119 aa).

This sequence belongs to the FlhD family. As to quaternary structure, homodimer; disulfide-linked. Forms a heterohexamer composed of two FlhC and four FlhD subunits. Each FlhC binds a FlhD dimer, forming a heterotrimer, and a hexamer assembles by dimerization of two heterotrimers.

Its subcellular location is the cytoplasm. In terms of biological role, functions in complex with FlhC as a master transcriptional regulator that regulates transcription of several flagellar and non-flagellar operons by binding to their promoter region. Activates expression of class 2 flagellar genes, including fliA, which is a flagellum-specific sigma factor that turns on the class 3 genes. Also regulates genes whose products function in a variety of physiological pathways. This chain is Flagellar transcriptional regulator FlhD, found in Shigella dysenteriae serotype 1 (strain Sd197).